The chain runs to 141 residues: VLSSADKNNVKACWGKIGSHAGEYGAEALERTFCSFPTTKTYFPHFDLSHGSAQVQTHGQKVADALTKAVAHINNLPNALSDLSDLHAYKLRVDPVNFKFLSHCLLVTLACHHPEEFTPAVHASLDKFFSAVSTVLTSKYR.

The region spanning V1 to R141 is the Globin domain. Residue S3 is modified to Phosphoserine. Residues K7 and K11 each carry the N6-succinyllysine modification. K16 carries the N6-acetyllysine; alternate modification. K16 is modified (N6-succinyllysine; alternate). A Phosphotyrosine modification is found at Y24. At S35 the chain carries Phosphoserine. At K40 the chain carries N6-succinyllysine. S49 carries the phosphoserine modification. Residue H58 participates in O2 binding. Position 87 (H87) interacts with heme b. A Phosphoserine modification is found at S102. T108 is modified (phosphothreonine). S124 bears the Phosphoserine mark. Phosphothreonine occurs at positions 134 and 137. S138 carries the post-translational modification Phosphoserine.

This sequence belongs to the globin family. Heterotetramer of two alpha chains and two beta chains. As to expression, red blood cells.

Involved in oxygen transport from the lung to the various peripheral tissues. Its function is as follows. Hemopressin acts as an antagonist peptide of the cannabinoid receptor CNR1. Hemopressin-binding efficiently blocks cannabinoid receptor CNR1 and subsequent signaling. The sequence is that of Hemoglobin subunit alpha (HBA) from Panthera tigris sumatrae (Sumatran tiger).